The chain runs to 148 residues: Large-conductance mechanosensitive channel (148 aa).

2 helical membrane passes run 9–29 (AFAVKGNVVDMAVGIIIGAAF) and 79–99 (IQTVIDFIIVAFAIFMGVKAI).

It belongs to the MscL family. As to quaternary structure, homopentamer.

It localises to the cell inner membrane. In terms of biological role, channel that opens in response to stretch forces in the membrane lipid bilayer. May participate in the regulation of osmotic pressure changes within the cell. The protein is Large-conductance mechanosensitive channel of Pseudomonas syringae pv. syringae (strain B728a).